The sequence spans 388 residues: Alanine racemase (388 aa).

Lys40 serves as the catalytic Proton acceptor; specific for D-alanine. The residue at position 40 (Lys40) is an N6-(pyridoxal phosphate)lysine. Residue Arg137 coordinates substrate. The Proton acceptor; specific for L-alanine role is filled by Tyr269. Position 318 (Met318) interacts with substrate.

The protein belongs to the alanine racemase family. Pyridoxal 5'-phosphate serves as cofactor.

It catalyses the reaction L-alanine = D-alanine. It participates in amino-acid biosynthesis; D-alanine biosynthesis; D-alanine from L-alanine: step 1/1. Its function is as follows. Catalyzes the interconversion of L-alanine and D-alanine. May also act on other amino acids. The protein is Alanine racemase (alr) of Halalkalibacterium halodurans (strain ATCC BAA-125 / DSM 18197 / FERM 7344 / JCM 9153 / C-125) (Bacillus halodurans).